Consider the following 185-residue polypeptide: Elongation factor P (185 aa).

The protein belongs to the elongation factor P family.

It is found in the cytoplasm. It functions in the pathway protein biosynthesis; polypeptide chain elongation. Its function is as follows. Involved in peptide bond synthesis. Stimulates efficient translation and peptide-bond synthesis on native or reconstituted 70S ribosomes in vitro. Probably functions indirectly by altering the affinity of the ribosome for aminoacyl-tRNA, thus increasing their reactivity as acceptors for peptidyl transferase. This is Elongation factor P from Trichodesmium erythraeum (strain IMS101).